Consider the following 570-residue polypeptide: MVAQQQGKFTVGDYLAERLAQVGVRHHFVVPGDYNLILLDKLQAHPDLKEVGCANELNCSLAAEGYARANGISACVVTYSVGALSAFNGTGSAYAENLPLVLISGSPNTNDPSQYHILHHTLGHPDYTYQYEMAKKITCCAVAIPRAIDAPRLIDRALRAAILARKPCYIEIPTNLAGATCVRPGPISAITDPITSDKSALEAAAKCAAEYLDGKLKPVILVGPKAGRAGSEKELIEFAEAMGCAVALQPAAKGMFPEDHKQFVGIFWGQVSSDAADAMVHWADAMICVGAVFNDYSTVGWTAVPNIPLMTVDMDHVTFPGAHFSRVRMCEFLSHLATQVTFNDSTMIEYKRLKPDPPHVHTAEREEPLSRKEISRQVQEMLTDKTSLFVDTGDSWFNGIQLKLPPGAKFEIEMQWGHIGWSIPAAFGYALRHPDRHTIVLVGDGSFQVTAQEVSQMVRFKVPITIMLINNRGYTIEVEIHDGSYNKIKNWDYAMLVEAFNSTDGHAKGLLANTAGELADAIKVAESHKEGPTLIECTIDQDDCSKELITWGHYVAAANARPPRNMSVQE.

A propeptide spans 1-2 (MV) (removed in mature form). Positions 33 and 120 each coordinate substrate. A thiamine pyrophosphate binding region spans residues 394–476 (DSWFNGIQLK…MLINNRGYTI (83 aa)). 3 residues coordinate Mg(2+): D444, N471, and G473. Residue E477 participates in substrate binding.

It belongs to the TPP enzyme family. In terms of assembly, homomer. A metal cation is required as a cofactor. Thiamine diphosphate serves as cofactor.

It is found in the cytoplasm. It catalyses the reaction a 2-oxocarboxylate + H(+) = an aldehyde + CO2. The protein operates within carbohydrate metabolism; pyruvate metabolism. The sequence is that of Pyruvate decarboxylase (cfp) from Neurospora crassa (strain ATCC 24698 / 74-OR23-1A / CBS 708.71 / DSM 1257 / FGSC 987).